A 239-amino-acid polypeptide reads, in one-letter code: Ribosomal RNA small subunit methyltransferase G (239 aa).

Residues G78, F83, 129-130 (AE), and R148 contribute to the S-adenosyl-L-methionine site.

This sequence belongs to the methyltransferase superfamily. RNA methyltransferase RsmG family.

It localises to the cytoplasm. In terms of biological role, specifically methylates the N7 position of a guanine in 16S rRNA. The chain is Ribosomal RNA small subunit methyltransferase G from Clostridium botulinum (strain 657 / Type Ba4).